Here is a 480-residue protein sequence, read N- to C-terminus: Glutathione reductase (480 aa).

FAD contacts are provided by Ser31 and Gly32. A glutathione-binding site is contributed by Ser31. Arg38 lines the glutathione pocket. Residues Glu51, Thr58, Cys59, and Lys67 each contribute to the FAD site. Cys59 and Cys64 form a disulfide bridge. Tyr121 contributes to the glutathione binding site. Ala137 lines the FAD pocket. 4 residues coordinate NADP(+): Ile206, Glu209, Arg226, and Gly291. An FAD-binding site is contributed by Asp331. Glu337 contributes to the NADP(+) binding site. Thr339 is an FAD binding site. Arg347 lines the glutathione pocket. Val372 provides a ligand contact to NADP(+). Residue Lys422 participates in glutathione binding. Residue His469 coordinates FAD. His469 (proton acceptor) is an active-site residue.

It belongs to the class-I pyridine nucleotide-disulfide oxidoreductase family. As to quaternary structure, homodimer. It depends on FAD as a cofactor.

The protein resides in the cytoplasm. Its subcellular location is the mitochondrion. The enzyme catalyses 2 glutathione + NADP(+) = glutathione disulfide + NADPH + H(+). Its function is as follows. Catalyzes the reduction of glutathione disulfide (GSSG) to reduced glutathione (GSH). Constitutes the major mechanism to maintain a high GSH:GSSG ratio in the cytosol. The polypeptide is Glutathione reductase (GLR1) (Eremothecium gossypii (strain ATCC 10895 / CBS 109.51 / FGSC 9923 / NRRL Y-1056) (Yeast)).